The chain runs to 134 residues: Small ribosomal subunit protein uS11 (134 aa).

This sequence belongs to the universal ribosomal protein uS11 family. As to quaternary structure, part of the 30S ribosomal subunit. Interacts with proteins S7 and S18. Binds to IF-3.

Located on the platform of the 30S subunit, it bridges several disparate RNA helices of the 16S rRNA. Forms part of the Shine-Dalgarno cleft in the 70S ribosome. This chain is Small ribosomal subunit protein uS11, found in Frankia casuarinae (strain DSM 45818 / CECT 9043 / HFP020203 / CcI3).